A 383-amino-acid polypeptide reads, in one-letter code: Galactokinase (383 aa).

Position 34 to 37 (34 to 37 (EHTD)) interacts with substrate. ATP is bound at residue 124 to 130 (GAGLSSS). Residues Ser-130 and Glu-162 each coordinate Mg(2+). Asp-174 acts as the Proton acceptor in catalysis. Tyr-223 serves as a coordination point for substrate.

The protein belongs to the GHMP kinase family. GalK subfamily.

It localises to the cytoplasm. The enzyme catalyses alpha-D-galactose + ATP = alpha-D-galactose 1-phosphate + ADP + H(+). The protein operates within carbohydrate metabolism; galactose metabolism. Catalyzes the transfer of the gamma-phosphate of ATP to D-galactose to form alpha-D-galactose-1-phosphate (Gal-1-P). This is Galactokinase from Serratia proteamaculans (strain 568).